We begin with the raw amino-acid sequence, 199 residues long: Oligoribonuclease (199 aa).

The region spanning 5-170 (LVWIDCEMTG…ADIRESIREL (166 aa)) is the Exonuclease domain. Tyrosine 127 is an active-site residue.

This sequence belongs to the oligoribonuclease family.

It is found in the cytoplasm. 3'-to-5' exoribonuclease specific for small oligoribonucleotides. This is Oligoribonuclease from Rhodococcus jostii (strain RHA1).